Here is a 267-residue protein sequence, read N- to C-terminus: Short-chain dehydrogenase/reductase GME11361 (267 aa).

NADP(+)-binding residues include Ile-10, Thr-36, Lys-42, Asp-57, Asn-80, Tyr-129, Lys-133, Val-162, and Ser-164. Tyr-129 functions as the Proton acceptor in the catalytic mechanism. Catalysis depends on Lys-133, which acts as the Lowers pKa of active site Tyr.

This sequence belongs to the short-chain dehydrogenases/reductases (SDR) family.

It participates in secondary metabolite biosynthesis. Its function is as follows. Short-chain dehydrogenase/reductase; part of the gene cluster that mediates the biosynthesis of dibenzodioxocinones such as pestalotiollide B, a novel class of inhibitors against cholesterol ester transfer protein (CEPT). The biosynthesis initiates from condensation of acetate and malonate units catalyzed by the non-reducing PKS pks8/GME11356. Pks8/GME11356 lacks a thioesterase (TE) domain, which is important to the cyclizing of the third ring of atrochrysone carboxylic acid, and the esterase GME11355 might play the role of TE and catalyzes the cyclization reaction of the C ring. The lactamase-like protein GME11357 (or other beta-lactamases in Pestalotiopsis microspora) probably hydrolyzes the thioester bond between the ACP of pks8/GME11356 and the intermediate to release atrochrysone carboxylic acid, which is spontaneously dehydrates to form endocrocin anthrone. Endocrocin anthrone is further converted to emodin via the endocrocin intermediate. Emodin is then oxidized by several enzymes such as the Baeyer-Villiger oxidase GME11358, the oxidoreductase GME11367, the short chain dehydrogenase/reductase GME11373, as well as by other oxidoreductases from the cluster, to modify the A and C rings and open the B ring, and finally yield monodictyphenone. The prenyltransferase GME11375 may catalyze the addition reaction between the C5 side chains and the carbon bone of dibenzodioxocinones. The remaining biochemical reactions to the final product dibenzodioxocinones should be methylation catalyzed by methyltransferase GME11366 and reduction and lactonization reaction catalyzed by a series of oxidordeuctases. This Pestalotiopsis microspora protein is Short-chain dehydrogenase/reductase GME11361.